We begin with the raw amino-acid sequence, 30 residues long: LKDGYPTNSKGCKISGCLPGENKFCLNECQ.

The LCN-type CS-alpha/beta domain occupies 2–30 (KDGYPTNSKGCKISGCLPGENKFCLNECQ).

It belongs to the long (4 C-C) scorpion toxin superfamily. Sodium channel inhibitor family. Expressed by the venom gland.

The protein resides in the secreted. Binds to sodium channels (Nav) and inhibits both the activation and inactivation of the activated channels, thereby blocking neuronal transmission. In Babycurus centrurimorphus (East African scorpion), this protein is Babycurus-toxin 1.